A 278-amino-acid chain; its full sequence is Large ribosomal subunit protein uL2 (278 aa).

The disordered stretch occupies residues Arg-218–Lys-278.

It belongs to the universal ribosomal protein uL2 family. As to quaternary structure, part of the 50S ribosomal subunit. Forms a bridge to the 30S subunit in the 70S ribosome.

Its function is as follows. One of the primary rRNA binding proteins. Required for association of the 30S and 50S subunits to form the 70S ribosome, for tRNA binding and peptide bond formation. It has been suggested to have peptidyltransferase activity; this is somewhat controversial. Makes several contacts with the 16S rRNA in the 70S ribosome. In Rhizobium etli (strain ATCC 51251 / DSM 11541 / JCM 21823 / NBRC 15573 / CFN 42), this protein is Large ribosomal subunit protein uL2.